The following is an 84-amino-acid chain: MKTQTLLFTFSLVLLMVATQTEALLGGLLQSLLGKRGLLDNLLGKRGLLFGKRALTNQDLFDLAYDPSLSAADMDALEMLLENY.

A signal peptide spans 1–23 (MKTQTLLFTFSLVLLMVATQTEA). Residue Leu33 is modified to Leucine amide. A propeptide spanning residues 37–84 (GLLDNLLGKRGLLFGKRALTNQDLFDLAYDPSLSAADMDALEMLLENY) is cleaved from the precursor.

It belongs to the non-disulfide-bridged peptide (NDBP) superfamily. Short antimicrobial peptide (group 4) family. As to expression, expressed by the venom gland.

It is found in the secreted. The protein localises to the target cell membrane. Its function is as follows. Antimicrobial peptide. This is Peptide Ctry2346 from Chaerilus tryznai (Scorpion).